A 142-amino-acid chain; its full sequence is Galactose-binding lectin l-1 (142 aa).

One can recognise a Galectin domain in the interval 3-134; the sequence is FVEVKNLIMK…DATVKNISVN (132 aa). Residue 68-74 participates in a beta-D-galactoside binding; sequence WQEEQRD. N130 is a glycosylation site (N-linked (GlcNAc...) asparagine).

As to quaternary structure, homodimer. In terms of processing, the N-terminus is blocked. Skin; highest expression in that of individuals showing resistance to infectious disease.

It localises to the secreted. Involved in host defense at the body surface. Causes agglutination of the Gram-positive bacterium S.difficile. Possesses calcium-independent hemagglutinating activity. In Anguilla japonica (Japanese eel), this protein is Galactose-binding lectin l-1.